A 121-amino-acid polypeptide reads, in one-letter code: RxLR effector protein PexRD2 (121 aa).

Residues 1-18 form the signal peptide; sequence MRLSYVFVVFAASLLVTA. Residues 38–56 carry the RxLR-dEER motif; sequence RLLRKHYTAAENDGDSEAR. The interval 57–121 is WY domain; the sequence is ALNPEKMKTM…LNYVAEHTAV (65 aa).

This sequence belongs to the RxLR effector family.

The protein localises to the secreted. The protein resides in the host cytoplasm. It is found in the host nucleus. Functionally, secreted effector involved in P.mirabilis colonization of host plants. May perturb the signaling of cell death associated with plant immunity, via interaction with a host MAP kinase. The polypeptide is RxLR effector protein PexRD2 (Phytophthora mirabilis).